Reading from the N-terminus, the 596-residue chain is V-type ATP synthase alpha chain (596 aa).

Residue Gly233–Thr240 coordinates ATP.

This sequence belongs to the ATPase alpha/beta chains family.

It carries out the reaction ATP + H2O + 4 H(+)(in) = ADP + phosphate + 5 H(+)(out). Its function is as follows. Produces ATP from ADP in the presence of a proton gradient across the membrane. The V-type alpha chain is a catalytic subunit. This Streptococcus sanguinis (strain SK36) protein is V-type ATP synthase alpha chain.